The chain runs to 197 residues: Stanniocalcin-2 (197 aa).

The interval 1–20 is disordered; it reads TDAXNPPEGPQDRGSQQKGR.

This sequence belongs to the stanniocalcin family. As to quaternary structure, homodimer; disulfide-linked.

It is found in the secreted. Functionally, has an anti-hypocalcemic action on calcium and phosphate homeostasis. The chain is Stanniocalcin-2 (STC2) from Cavia porcellus (Guinea pig).